The sequence spans 514 residues: MPDIDTCPICVESPLEDSTTFNNIAWLQCDICNQWFHASCLKIPKIEVNNLHSYHCEGCSKSHGPSIPKRKSKRSKVQIDYVALNDGDVFAVDKSSHPHVDKFLSFEVNANEIDDKINPYIDFRKDITADYALDTRLTRPVLIPRADLDIVDMKLPIEGKEITIDYIANEVGDDTPLDVMDVLTQQGVNPGWNLGKWRDYYNTDELSRDRIRNVISLEISDVDSFGKSFRRPRIVRDMDLVDKVWNDKSPRPKVTKYCLMSVTGSFTDFHIDFSGTSVYYTVCSGSKTFLMYPPTEQNLDIYTSWCLQPDQNYMWFGDFTKAFKGKGCTPSGGFKVTLSPGDLFIIPSGWIHAVFTPEDSLVIGGNFLTLMDLSMHLRIYEIEKVTRVPAKFRFPMFNRVLWLTSWYYYNNKSQFLKDLGQDAHIKNEAHIKSEAHSRGEVHTKTETHAVKDEPQPDQSVQYKTLSCLVSHLQSHYESSKINKVARNTIPAGLIGKDIPGYLAKLQSWLDELSP.

Residues 4–62 (IDTCPICVESPLEDSTTFNNIAWLQCDICNQWFHASCLKIPKIEVNNLHSYHCEGCSKS) form a PHD-type zinc finger. Positions 220 to 384 (SDVDSFGKSF…MHLRIYEIEK (165 aa)) constitute a JmjC domain. Thr267 contacts substrate. Positions 270 and 272 each coordinate Fe cation. Lys287 contacts substrate. Fe cation is bound at residue His352. A compositionally biased stretch (basic and acidic residues) spans 432 to 454 (KSEAHSRGEVHTKTETHAVKDEP). Residues 432 to 456 (KSEAHSRGEVHTKTETHAVKDEPQP) form a disordered region.

The protein belongs to the JHDM1 histone demethylase family. Fe(2+) is required as a cofactor.

The protein resides in the nucleus. The enzyme catalyses N(6),N(6)-dimethyl-L-lysyl(36)-[histone H3] + 2 2-oxoglutarate + 2 O2 = L-lysyl(36)-[histone H3] + 2 formaldehyde + 2 succinate + 2 CO2. Histone demethylase that specifically demethylates 'Lys-36' of histone H3, thereby playing a central role in histone code. This is JmjC domain-containing histone demethylation protein 1 (JHD1) from Debaryomyces hansenii (strain ATCC 36239 / CBS 767 / BCRC 21394 / JCM 1990 / NBRC 0083 / IGC 2968) (Yeast).